Here is a 377-residue protein sequence, read N- to C-terminus: Glycine oxidase (377 aa).

Residues valine 14 to isoleucine 15, glutamate 34 to lysine 35, alanine 42 to serine 43, alanine 47 to methionine 49, and valine 180 each bind FAD. The substrate site is built by arginine 309 and arginine 336. Histidine 334–leucine 340 provides a ligand contact to FAD.

The protein belongs to the DAO family. ThiO subfamily. Homotetramer. FAD is required as a cofactor.

The catalysed reaction is glycine + O2 + H2O = glyoxylate + H2O2 + NH4(+). It carries out the reaction N-ethylglycine + O2 + H2O = ethylamine + glyoxylate + H2O2. The enzyme catalyses sarcosine + O2 + H2O = methylamine + glyoxylate + H2O2. It catalyses the reaction D-alanine + O2 + H2O = pyruvate + H2O2 + NH4(+). Its pathway is cofactor biosynthesis; thiamine diphosphate biosynthesis. With respect to regulation, is inhibited at high substrate concentration. Catalyzes the FAD-dependent oxidative deamination of various amines and D-amino acids to yield the corresponding alpha-keto acids, ammonia/amine, and hydrogen peroxide. Oxidizes glycine, sarcosine (N-methylglycine), N-ethylglycine, D-proline, D-alanine, glycine-ethyl ester, and some other D-amino acids. Does not act on L-proline. Is essential for thiamine biosynthesis since the oxidation of glycine catalyzed by ThiO generates the glycine imine intermediate (dehydroglycine) required for the biosynthesis of the thiazole ring of thiamine pyrophosphate. The chain is Glycine oxidase from Geobacillus kaustophilus (strain HTA426).